Here is a 172-residue protein sequence, read N- to C-terminus: 3-hydroxydecanoyl-[acyl-carrier-protein] dehydratase (172 aa).

H71 is an active-site residue.

Belongs to the thioester dehydratase family. FabA subfamily. As to quaternary structure, homodimer.

It localises to the cytoplasm. The catalysed reaction is a (3R)-hydroxyacyl-[ACP] = a (2E)-enoyl-[ACP] + H2O. It catalyses the reaction (3R)-hydroxydecanoyl-[ACP] = (2E)-decenoyl-[ACP] + H2O. The enzyme catalyses (2E)-decenoyl-[ACP] = (3Z)-decenoyl-[ACP]. The protein operates within lipid metabolism; fatty acid biosynthesis. In terms of biological role, necessary for the introduction of cis unsaturation into fatty acids. Catalyzes the dehydration of (3R)-3-hydroxydecanoyl-ACP to E-(2)-decenoyl-ACP and then its isomerization to Z-(3)-decenoyl-ACP. Can catalyze the dehydratase reaction for beta-hydroxyacyl-ACPs with saturated chain lengths up to 16:0, being most active on intermediate chain length. In Edwardsiella ictaluri (strain 93-146), this protein is 3-hydroxydecanoyl-[acyl-carrier-protein] dehydratase.